We begin with the raw amino-acid sequence, 159 residues long: 6,7-dimethyl-8-ribityllumazine synthase (159 aa).

5-amino-6-(D-ribitylamino)uracil-binding positions include W30, 64–66, and 88–90; these read TFE and CVI. 93 to 94 is a binding site for (2S)-2-hydroxy-3-oxobutyl phosphate; sequence ET. H96 acts as the Proton donor in catalysis. Residue F121 coordinates 5-amino-6-(D-ribitylamino)uracil. Residue R135 participates in (2S)-2-hydroxy-3-oxobutyl phosphate binding.

The protein belongs to the DMRL synthase family.

It catalyses the reaction (2S)-2-hydroxy-3-oxobutyl phosphate + 5-amino-6-(D-ribitylamino)uracil = 6,7-dimethyl-8-(1-D-ribityl)lumazine + phosphate + 2 H2O + H(+). Its pathway is cofactor biosynthesis; riboflavin biosynthesis; riboflavin from 2-hydroxy-3-oxobutyl phosphate and 5-amino-6-(D-ribitylamino)uracil: step 1/2. Catalyzes the formation of 6,7-dimethyl-8-ribityllumazine by condensation of 5-amino-6-(D-ribitylamino)uracil with 3,4-dihydroxy-2-butanone 4-phosphate. This is the penultimate step in the biosynthesis of riboflavin. The protein is 6,7-dimethyl-8-ribityllumazine synthase of Cytophaga hutchinsonii (strain ATCC 33406 / DSM 1761 / CIP 103989 / NBRC 15051 / NCIMB 9469 / D465).